A 118-amino-acid chain; its full sequence is Large ribosomal subunit protein uL18 (118 aa).

Belongs to the universal ribosomal protein uL18 family. Part of the 50S ribosomal subunit; part of the 5S rRNA/L5/L18/L25 subcomplex. Contacts the 5S and 23S rRNAs.

Functionally, this is one of the proteins that bind and probably mediate the attachment of the 5S RNA into the large ribosomal subunit, where it forms part of the central protuberance. This chain is Large ribosomal subunit protein uL18, found in Wolinella succinogenes (strain ATCC 29543 / DSM 1740 / CCUG 13145 / JCM 31913 / LMG 7466 / NCTC 11488 / FDC 602W) (Vibrio succinogenes).